Reading from the N-terminus, the 527-residue chain is Light-independent protochlorophyllide reductase subunit B (527 aa).

D36 is a binding site for [4Fe-4S] cluster. The active-site Proton donor is the D290. A substrate-binding site is contributed by G425–L426.

It belongs to the ChlB/BchB/BchZ family. As to quaternary structure, protochlorophyllide reductase is composed of three subunits; ChlL, ChlN and ChlB. Forms a heterotetramer of two ChlB and two ChlN subunits. Requires [4Fe-4S] cluster as cofactor.

It catalyses the reaction chlorophyllide a + oxidized 2[4Fe-4S]-[ferredoxin] + 2 ADP + 2 phosphate = protochlorophyllide a + reduced 2[4Fe-4S]-[ferredoxin] + 2 ATP + 2 H2O. It participates in porphyrin-containing compound metabolism; chlorophyll biosynthesis (light-independent). Component of the dark-operative protochlorophyllide reductase (DPOR) that uses Mg-ATP and reduced ferredoxin to reduce ring D of protochlorophyllide (Pchlide) to form chlorophyllide a (Chlide). This reaction is light-independent. The NB-protein (ChlN-ChlB) is the catalytic component of the complex. This is Light-independent protochlorophyllide reductase subunit B from Synechococcus sp. (strain RCC307).